A 164-amino-acid chain; its full sequence is Protein SprT (164 aa).

The SprT-like domain maps to 14–156 (QQAETFFKRP…LCRRCREILV (143 aa)). Residue H69 participates in Zn(2+) binding. E70 is an active-site residue. H73 is a binding site for Zn(2+).

It belongs to the SprT family. It depends on Zn(2+) as a cofactor.

It localises to the cytoplasm. This chain is Protein SprT, found in Pseudomonas entomophila (strain L48).